Reading from the N-terminus, the 170-residue chain is Adenine phosphoribosyltransferase (170 aa).

The protein belongs to the purine/pyrimidine phosphoribosyltransferase family. Homodimer.

The protein resides in the cytoplasm. It carries out the reaction AMP + diphosphate = 5-phospho-alpha-D-ribose 1-diphosphate + adenine. Its pathway is purine metabolism; AMP biosynthesis via salvage pathway; AMP from adenine: step 1/1. In terms of biological role, catalyzes a salvage reaction resulting in the formation of AMP, that is energically less costly than de novo synthesis. In Bacillus subtilis (strain 168), this protein is Adenine phosphoribosyltransferase.